A 131-amino-acid polypeptide reads, in one-letter code: MNPTVYLSCLVVFSLFYLGKAQAENDDEFATEKQRLLRVYGDSSVDEATRYRNVDDLVKFYDKYSTLLPLKPDLTQRAQDLVRRYKEESARVVLVDGAPAQGGFWLPLVKLLIVQLGVEIASEGFKRAIES.

An N-terminal signal peptide occupies residues 1–23; the sequence is MNPTVYLSCLVVFSLFYLGKAQA.

It belongs to the Turandot family.

The protein localises to the secreted. A humoral factor that may play a role in stress tolerance. Requires Mekk1 expression in the fat body to regulate response to septic injury and consequent immune response. This chain is Protein Turandot M, found in Drosophila yakuba (Fruit fly).